Reading from the N-terminus, the 68-residue chain is Large ribosomal subunit protein uL29 (68 aa).

This sequence belongs to the universal ribosomal protein uL29 family.

The sequence is that of Large ribosomal subunit protein uL29 from Streptococcus agalactiae serotype Ia (strain ATCC 27591 / A909 / CDC SS700).